The chain runs to 209 residues: Ribosomal RNA large subunit methyltransferase E (209 aa).

Positions 63, 65, 83, 99, and 124 each coordinate S-adenosyl-L-methionine. Residue Lys-164 is the Proton acceptor of the active site.

It belongs to the class I-like SAM-binding methyltransferase superfamily. RNA methyltransferase RlmE family.

It is found in the cytoplasm. The catalysed reaction is uridine(2552) in 23S rRNA + S-adenosyl-L-methionine = 2'-O-methyluridine(2552) in 23S rRNA + S-adenosyl-L-homocysteine + H(+). Specifically methylates the uridine in position 2552 of 23S rRNA at the 2'-O position of the ribose in the fully assembled 50S ribosomal subunit. The polypeptide is Ribosomal RNA large subunit methyltransferase E (Shewanella frigidimarina (strain NCIMB 400)).